Consider the following 268-residue polypeptide: Ethylene-responsive transcription factor ERN1 (268 aa).

Polar residues predominate over residues 1–21 (MEIQFQQPNMQNQKAGISVTN). Positions 1 to 36 (MEIQFQQPNMQNQKAGISVTNKGGKFKGRNRNSNNT) are disordered. A DNA-binding region (AP2/ERF) is located at residues 38-95 (KFVGVRQRPSGRWVAEIKDTTQKIRMWLGTFETAEEAARAYDEAACLLRGSNTRTNFI). The tract at residues 114-154 (NRKGDKKQEDGAVASAPSNSKTTISNTSTITSNDDNKESTL) is disordered. The segment covering 131–146 (SNSKTTISNTSTITSN) has biased composition (low complexity).

This sequence belongs to the AP2/ERF transcription factor family. ERF subfamily. In terms of tissue distribution, expressed in roots, root hairs and leaves. Expressed in root epidermis and root hairs.

It is found in the nucleus. In terms of biological role, transcription factor involved in symbiotic nodule signaling in response to rhizobial Nod factors (NFs). Binds to the GCC-box (NF-responsive box) of ENOD11 promoter. Acts as a transcriptional activator of NF-responsive box-containing target gene promoters in root hairs. Functions as a transcriptional regulator required for root infection by symbiotic rhizobia, infection thread (IT) formation and maintenance, and nodule development. Necessary for NF-induced gene expression and spontaneous nodulation activated by CCAMK. Functions downstream of CCAMK to activate nodulation gene expression. Involved in early stages of root nodule development. Functions redundantly with ERN2. Is essential with ERN2 for the initiation of root hair infection, and nodule organogenesis and development. Required for accurate expression of the NF signaling genes ENOD11 and ENOD12. In Medicago truncatula (Barrel medic), this protein is Ethylene-responsive transcription factor ERN1.